The following is a 264-amino-acid chain: Small ribosomal subunit protein uS2 (264 aa).

The interval 225–264 (GKKAREERQLAAAKDAAGDAKPEAEEAPVAAEAEEAPAAE) is disordered.

The protein belongs to the universal ribosomal protein uS2 family.

This is Small ribosomal subunit protein uS2 from Corynebacterium glutamicum (strain R).